Consider the following 503-residue polypeptide: Zinc finger protein JACKDAW (503 aa).

Residues Ile32–Ser51 show a composition bias toward low complexity. Residues Ile32–Val68 are disordered. At Ser72 the chain carries Phosphoserine. 2 C2H2-type zinc fingers span residues Phe82 to His104 and Tyr124 to His154. Short sequence motifs (nuclear localization signal) lie at residues His100–Pro107 and Ile146–Lys153. A C2H2-type 2; degenerate zinc finger spans residues Trp159–Gly182. The Zn(2+) site is built by Cys161, Cys164, His177, Cys181, Cys188, Cys190, His203, and Cys207. A CCHC-type 2; atypical zinc finger spans residues Tyr186 to Ala209. An SHR-binding region spans residues Arg196–Asp208. 2 disordered regions span residues Ser301–Met417 and Arg432–Ala465. The span at Thr319–Ser358 shows a compositional bias: low complexity. Positions Met381–Pro392 are enriched in polar residues. The span at Ala396–Ala407 shows a compositional bias: low complexity. The span at Gly444–Ala465 shows a compositional bias: polar residues.

Interacts with SHR, SCR, MGP and itself. The heterodimer with SHR involves its zinc fingers. Interacts with SIEL. Binds to RGA and SCL3 competitively in the nucleus. As to expression, expressed in the quiescent center, the ground tissue stem cells and to a lesser extent in mature cortex and endodermis cells.

The protein localises to the nucleus. In terms of biological role, transcription factor that, together with BIB, regulates tissue boundaries and asymmetric cell division by a rapid up-regulation of 'SCARECROW' (SCR), thus controlling the nuclear localization of 'SHORT-ROOT' (SHR) and restricting its action. Binds DNA via its zinc fingers. Recognizes and binds to SCL3 promoter sequence 5'-AGACAA-3' to promote its expression when in complex with RGA. Confines CYCD6 expression to the cortex-endodermis initial/daughter (CEI/CEID) tissues. Required for radial patterning and stem cell maintenance. Counteracted by 'MAGPIE' (MGP). Binds to the SCR and MGP promoter sequences. Controls position-dependent signals that regulate epidermal-cell-type patterning. This is Zinc finger protein JACKDAW from Arabidopsis thaliana (Mouse-ear cress).